We begin with the raw amino-acid sequence, 190 residues long: Threonylcarbamoyl-AMP synthase (190 aa).

The region spanning 7–190 is the YrdC-like domain; sequence GDAIAAAIDV…ALTGELFRQG (184 aa).

Belongs to the SUA5 family. TsaC subfamily.

It localises to the cytoplasm. The catalysed reaction is L-threonine + hydrogencarbonate + ATP = L-threonylcarbamoyladenylate + diphosphate + H2O. Functionally, required for the formation of a threonylcarbamoyl group on adenosine at position 37 (t(6)A37) in tRNAs that read codons beginning with adenine. Catalyzes the conversion of L-threonine, HCO(3)(-)/CO(2) and ATP to give threonylcarbamoyl-AMP (TC-AMP) as the acyladenylate intermediate, with the release of diphosphate. The sequence is that of Threonylcarbamoyl-AMP synthase from Shigella boydii serotype 4 (strain Sb227).